The sequence spans 1060 residues: Positive regulator of purine utilization (1060 aa).

Polar residues predominate over residues 1–15 (MLNPSTSDIHTSPTA). Residues 1-48 (MLNPSTSDIHTSPTAVGNGRKRPHPIADSGSAMPSDPSAQQLPHPANE) are disordered. Residues 67–94 (CNRCRQRKNRCDQRLPRCQACEKAGVRC) constitute a DNA-binding region (zn(2)-C6 fungal-type). 5 disordered regions span residues 163 to 207 (EIAA…DAED), 251 to 282 (SVPG…TTRD), 367 to 391 (AEDQ…SRQY), 811 to 862 (VQTS…RFDM), and 877 to 969 (RQGS…PSGM). Composition is skewed to basic and acidic residues over residues 170–182 (SNDK…KEKN), 189–207 (KASR…DAED), and 260–269 (GPSRPKERLP). The segment covering 272 to 282 (ATGTEGSTTRD) has biased composition (polar residues). The span at 367 to 377 (AEDQKEGRDHS) shows a compositional bias: basic and acidic residues. Residues 811–831 (VQTSTSGSRQFNATQSRSRPY) are compositionally biased toward polar residues. 2 stretches are compositionally biased toward low complexity: residues 832–859 (SRQQ…PLPR) and 930–952 (PRYY…AASG).

The protein resides in the nucleus. Functionally, mediates the induction of a number of unlinked genes involved in purine utilization. Binds to the consensus sequence 5'-TCGGNNNNNNCCGA-3'. This is Positive regulator of purine utilization (uaY) from Emericella nidulans (strain FGSC A4 / ATCC 38163 / CBS 112.46 / NRRL 194 / M139) (Aspergillus nidulans).